Here is a 450-residue protein sequence, read N- to C-terminus: uncharacterized protein (450 aa).

It belongs to the herpesviridae BBLF2 family.

This is an uncharacterized protein from Saimiriine herpesvirus 2 (strain 11) (SaHV-2).